Here is a 514-residue protein sequence, read N- to C-terminus: MLNDRIAVTCFQTLLKKSNVKHEMEQTNNYIVNNLADINRNTFPALAGSVRIDFNSDYYISGGQIVVSPKDSNAYVKLLIVYLKYCYINYSAKTKYPPQSLLAVLDYDSFKAKWVKYLDKSLTDYLDDNKTEGCSFTEQQVVEKYPQVDSLVAKILYRVCNSLGKLLDLKDFENKNISGFEINTAQDSPTVADDNESNDFFRECVNDQRYYSSLSGSKLGKAKLEANAYIFKILLKSASGEFDIDRLSRNPLAISKFMNLYTNHVTDSETFKSKFEALKSIKTPFASFIKKAFGIRLNFEDSKIFYALPKERQSDVLSDDMMVESIVRDAASFTVVSDNNYLPERVDRFVTQLLLELFPKTKASFPNKIMFGFLHYFALSTTNSKRFNDTQESTIEIEGETLKISLKFITSYLRNAIQSQHPDYADSNIVRLWCNKRSNLALGYFKSRNIQLYLYSKYPRLLNYMRFDYFKGLDMGKLTDEERLSIQTLRCITEDRSEGTLATHNDLNSWILRP.

It localises to the virion. The polypeptide is Protein p59 (Lettuce infectious yellows virus (isolate United States/92) (LIYV)).